The primary structure comprises 115 residues: Large ribosomal subunit protein bL20 (115 aa).

This sequence belongs to the bacterial ribosomal protein bL20 family.

In terms of biological role, binds directly to 23S ribosomal RNA and is necessary for the in vitro assembly process of the 50S ribosomal subunit. It is not involved in the protein synthesizing functions of that subunit. The polypeptide is Large ribosomal subunit protein bL20 (Prochlorococcus marinus (strain MIT 9215)).